Reading from the N-terminus, the 216-residue chain is Maleylacetoacetate isomerase (216 aa).

Methionine 1 carries the post-translational modification N-acetylmethionine. The GST N-terminal domain maps to 4–87; that stretch reads GKPILYSYFR…YLEETRPIPR (84 aa). Residues 14–19 and glutamine 45 contribute to the glutathione site; that span reads SSCSWR. N6-succinyllysine is present on lysine 57. Glutathione contacts are provided by residues valine 59, 71-72, glutamine 111, and 115-117; these read QS and NLS. In terms of domain architecture, GST C-terminal spans 92-212; that stretch reads DPQKRAIVRM…HPRRQPDTPA (121 aa). Position 136 is a phosphothreonine (threonine 136). A Phosphoserine modification is found at serine 137. Position 177 is an N6-succinyllysine (lysine 177). Serine 181 is modified (phosphoserine).

Belongs to the GST superfamily. Zeta family. Homodimer. Requires glutathione as cofactor. Expressed in liver, kidney, seminal glands and breast.

Its subcellular location is the cytoplasm. The enzyme catalyses 4-maleylacetoacetate = 4-fumarylacetoacetate. The catalysed reaction is RX + glutathione = an S-substituted glutathione + a halide anion + H(+). It participates in amino-acid degradation; L-phenylalanine degradation; acetoacetate and fumarate from L-phenylalanine: step 5/6. Its function is as follows. Probable bifunctional enzyme showing minimal glutathione-conjugating activity with ethacrynic acid and 7-chloro-4-nitrobenz-2-oxa-1, 3-diazole and maleylacetoacetate isomerase activity. Also has low glutathione peroxidase activity with t-butyl and cumene hydroperoxides. Is able to catalyze the glutathione dependent oxygenation of dichloroacetic acid to glyoxylic acid. This is Maleylacetoacetate isomerase (Gstz1) from Mus musculus (Mouse).